Here is a 90-residue protein sequence, read N- to C-terminus: Small ribosomal subunit protein uS15c (90 aa).

Belongs to the universal ribosomal protein uS15 family. Part of the 30S ribosomal subunit.

Its subcellular location is the plastid. The protein resides in the chloroplast. This Drimys granadensis protein is Small ribosomal subunit protein uS15c (rps15).